Here is a 191-residue protein sequence, read N- to C-terminus: UPF0302 protein USA300HOU_1400 (191 aa).

It belongs to the UPF0302 family.

The chain is UPF0302 protein USA300HOU_1400 from Staphylococcus aureus (strain USA300 / TCH1516).